We begin with the raw amino-acid sequence, 374 residues long: Carnitine monooxygenase oxygenase subunit (374 aa).

A Rieske domain is found at 47–155; the sequence is WICVAHSSEL…LEEYAGFVFI (109 aa). The [2Fe-2S] cluster site is built by C89, H91, C109, and H112. Fe cation is bound by residues H211, H216, and D325.

Belongs to the bacterial ring-hydroxylating dioxygenase alpha subunit family. CntA subfamily. In terms of assembly, composed of an oxygenase subunit and a reductase subunit. The cofactor is [2Fe-2S] cluster. Fe cation is required as a cofactor.

The catalysed reaction is (R)-carnitine + NADH + O2 + H(+) = (3R)-3-hydroxy-4-oxobutanoate + trimethylamine + NAD(+) + H2O. The enzyme catalyses (R)-carnitine + NADPH + O2 + H(+) = (3R)-3-hydroxy-4-oxobutanoate + trimethylamine + NADP(+) + H2O. It functions in the pathway amine and polyamine metabolism; carnitine metabolism. Functionally, converts carnitine to trimethylamine and malic semialdehyde. The protein is Carnitine monooxygenase oxygenase subunit (yeaW) of Escherichia coli O157:H7.